A 277-amino-acid polypeptide reads, in one-letter code: RNA-binding protein pno-1 (277 aa).

Disordered regions lie at residues 1–52 (MATS…KLVK) and 72–100 (DEDATADTADDSTGPKSSKRTKGVKGESR). Positions 8–27 (FDDELPMEEGMPELLDDEDV) are enriched in acidic residues. A compositionally biased stretch (polar residues) spans 30 to 40 (TLPSLLEQNLD). Over residues 72–81 (DEDATADTAD) the composition is skewed to acidic residues. The 53-residue stretch at 198-250 (GDHVSRAIGRIAGKDGRTKLVIENTTKTRIVVANTKIHILGAYQNLKLARNAV) folds into the KH domain.

Belongs to the PNO1 family. Part of the small subunit (SSU) processome, composed of more than 70 proteins and the RNA chaperone small nucleolar RNA (snoRNA) U3.

It is found in the nucleus. The protein localises to the nucleolus. Part of the small subunit (SSU) processome, first precursor of the small eukaryotic ribosomal subunit. During the assembly of the SSU processome in the nucleolus, many ribosome biogenesis factors, an RNA chaperone and ribosomal proteins associate with the nascent pre-rRNA and work in concert to generate RNA folding, modifications, rearrangements and cleavage as well as targeted degradation of pre-ribosomal RNA by the RNA exosome. Positively regulates dimethylation of two adjacent adenosines in the loop of a conserved hairpin near the 3'-end of 18S rRNA. This Caenorhabditis elegans protein is RNA-binding protein pno-1.